Reading from the N-terminus, the 110-residue chain is Insulin (110 aa).

A signal peptide spans 1–24 (MALWMRLLPLLALLALWGPDPAQA). Disulfide bonds link Cys31–Cys96, Cys43–Cys109, and Cys95–Cys100. The propeptide at 57 to 87 (EAEDLQVGQVELGGGPGAGSLQPLALEGSLQ) is c peptide.

It belongs to the insulin family. Heterodimer of a B chain and an A chain linked by two disulfide bonds.

It is found in the secreted. Its function is as follows. Insulin decreases blood glucose concentration. It increases cell permeability to monosaccharides, amino acids and fatty acids. It accelerates glycolysis, the pentose phosphate cycle, and glycogen synthesis in liver. This Pongo pygmaeus (Bornean orangutan) protein is Insulin (INS).